We begin with the raw amino-acid sequence, 513 residues long: Mannan endo-1,4-beta-mannosidase A and B (513 aa).

The N-terminal stretch at 1–26 is a signal peptide; sequence MKVYKKVAFVMAFIMFFSVLPTISMS. The region spanning 41-353 is the GH26 domain; that stretch reads QTTKNVYSWL…FNDSWVVNRG (313 aa). Substrate is bound at residue histidine 132. The active-site Proton donor is glutamate 195. Tryptophan 200 and tyrosine 270 together coordinate substrate. The Nucleophile role is filled by glutamate 295. Position 429–430 (429–430) interacts with substrate; it reads IK.

Belongs to the glycosyl hydrolase 26 family.

Its subcellular location is the secreted. The catalysed reaction is Random hydrolysis of (1-&gt;4)-beta-D-mannosidic linkages in mannans, galactomannans and glucomannans.. Functionally, could be involved in the degradation of glucomannan and catalyzes the endo hydrolysis of beta-1,4-linked mannan, galactomannan and glucomannan. The protein is Mannan endo-1,4-beta-mannosidase A and B of Caldalkalibacillus mannanilyticus (strain DSM 16130 / CIP 109019 / JCM 10596 / AM-001) (Bacillus mannanilyticus).